The following is a 2581-amino-acid chain: Highly reducing polyketide synthase sorA (2581 aa).

One can recognise a Ketosynthase family 3 (KS3) domain in the interval 14–436 (SEPIAIIGMS…GSNAHIILED (423 aa)). Active-site for beta-ketoacyl synthase activity residues include cysteine 187, histidine 322, and histidine 359. The malonyl-CoA:ACP transacylase (MAT) domain stretch occupies residues 574-868 (VFTGQGAQWN…VVEVGPHTAL (295 aa)). The N-terminal hotdog fold stretch occupies residues 966–1103 (HDLLGSIVEG…GLVSVELGES (138 aa)). Positions 966 to 1270 (HDLLGSIVEG…GFSYQSLGRS (305 aa)) are dehydratase (DH) domain. Residues 966-1273 (HDLLGSIVEG…YQSLGRSTSL (308 aa)) form the PKS/mFAS DH domain. Catalysis depends on histidine 998, which acts as the Proton acceptor; for dehydratase activity. The tract at residues 1119–1273 (TRRILPADLF…YQSLGRSTSL (155 aa)) is C-terminal hotdog fold. Aspartate 1184 (proton donor; for dehydratase activity) is an active-site residue. Residues 1461–1568 (LEVGAATGAI…SSLLKPGGTL (108 aa)) form a methyltransferase (CMet) domain region. Residues 1873 to 2184 (LKPDLLVFGD…AGDQIGKVVL (312 aa)) are enoyl reductase (ER)domain. The interval 2207–2389 (VSYLIVGGSG…AVSIDLSVVN (183 aa)) is ketoreductase (KR) domain. Positions 2497–2574 (DAVRVVGTAI…QLAIDVVDRS (78 aa)) constitute a Carrier domain. Position 2534 is an O-(pantetheine 4'-phosphoryl)serine (serine 2534).

The protein operates within secondary metabolite biosynthesis. In terms of biological role, highly reducing polyketide synthase; part of the gene cluster that mediates the biosynthesis of sorbicillinoids, a diverse group of yellow secondary metabolites that restrict growth of competing pathogenic fungi but not of bacteria. Sorbicillinoids biosynthesis requires the action of two PKSs. SorA iteratively combines three acetyl units and the growing chain is modified by the ketoacyl reductase subunit, and optional by the enoyl reductase subunit in the second cycle. The polyketide is then handed over to the PKS SorB, which adds three more acetyl units, and two methyl groups. SorB releases an aldehyde, which undergoes spontaneous cyclization resulting in the formation of sorbicillin or 2',3'-dihydrosorbicillin. The monooxygenase sorC oxidizes sorbicillin and 2',3'-dihydrosorbicillin to 2',3'-dihydrosorbicillinol and sorbicillinol, respectively. The oxidoreductase sorD further converts sorbicillinol into oxosorbicillinol. Sorbicillinol is the building block for the other sorbicillinoids such as disorbicillinol, bisvertinolon, and dihydrobisvertinolone. The polypeptide is Highly reducing polyketide synthase sorA (Penicillium rubens (strain ATCC 28089 / DSM 1075 / NRRL 1951 / Wisconsin 54-1255) (Penicillium chrysogenum)).